A 269-amino-acid chain; its full sequence is Probable ribosomal RNA small subunit methyltransferase A (269 aa).

S-adenosyl-L-methionine-binding residues include histidine 23, leucine 25, glycine 50, glutamate 71, aspartate 95, and asparagine 110.

This sequence belongs to the class I-like SAM-binding methyltransferase superfamily. rRNA adenine N(6)-methyltransferase family. RsmA subfamily.

Its subcellular location is the cytoplasm. Functionally, specifically dimethylates two adjacent adenosines in the loop of a conserved hairpin near the 3'-end of 16S rRNA in the 30S particle. May play a critical role in biogenesis of 30S subunits. The polypeptide is Probable ribosomal RNA small subunit methyltransferase A (Pyrococcus abyssi (strain GE5 / Orsay)).